Reading from the N-terminus, the 142-residue chain is Mitochondrial import receptor subunit TOM22 homolog (142 aa).

A compositionally biased stretch (low complexity) spans 1-11 (MAAAVAAAGAG). Residues 1–42 (MAAAVAAAGAGEPQSPDELLPKGDAEKPEEELEEDDDEELDE) form a disordered region. Alanine 2 is subject to N-acetylalanine. Residues 2 to 83 (AAAVAAAGAG…AQKMYRFSRA (82 aa)) are Cytoplasmic-facing. Serine 15 is modified (phosphoserine). A compositionally biased stretch (acidic residues) spans 27-42 (KPEEELEEDDDEELDE). The tract at residues 41–50 (DETLSERLWG) is import sequence; necessary for mitochondrion outer membrane localization and integration in the TOM complex. At threonine 43 the chain carries Phosphothreonine. Serine 45 is subject to Phosphoserine. The segment at 83 to 103 (AALWIGTTSFMILVLPVVFET) is TMD; necessary for mitochondrion outer membrane localization and integration in the TOM complex. The helical transmembrane segment at 84-103 (ALWIGTTSFMILVLPVVFET) threads the bilayer. Residues 104–142 (EKLQMEQQQQLQQRQILLGPNTGLSGGMPGALPSLPGKI) lie on the Mitochondrial intermembrane side of the membrane. A C-tail signal; necessary for mitochondrion outer membrane localization and integration in the TOM complex region spans residues 123-142 (PNTGLSGGMPGALPSLPGKI).

It belongs to the Tom22 family. As to quaternary structure, forms part of the preprotein translocase complex of the outer mitochondrial membrane (TOM complex) which consists of at least 7 different proteins (TOMM5, TOMM6, TOMM7, TOMM20, TOMM22, TOMM40 and TOMM70). Interacts with TOMM40. Interacts with PPP2R2B. In terms of tissue distribution, ubiquitous.

It localises to the mitochondrion outer membrane. Functionally, central receptor component of the translocase of the outer membrane of mitochondria (TOM complex) responsible for the recognition and translocation of cytosolically synthesized mitochondrial preproteins. Together with the peripheral receptor TOM20 functions as the transit peptide receptor and facilitates the movement of preproteins into the translocation pore. Required for the translocation across the mitochondrial outer membrane of cytochrome P450 monooxygenases. The sequence is that of Mitochondrial import receptor subunit TOM22 homolog (TOMM22) from Homo sapiens (Human).